Consider the following 778-residue polypeptide: Exo-beta-D-glucosaminidase (778 aa).

Substrate-binding positions include Tyr55, 104 to 105 (GE), 180 to 181 (DE), Glu308, Glu349, and Tyr381. Glu181 acts as the Proton donor in catalysis. The Nucleophile role is filled by Glu349.

This sequence belongs to the glycosyl hydrolase 35 family. Homodimer.

The protein localises to the cytoplasm. It carries out the reaction beta-D-glucosaminyl-(1-&gt;4)-N-acetyl-D-glucosamine + H2O = D-glucosamine + N-acetyl-D-glucosamine. The protein operates within glycan degradation; chitin degradation. Functionally, exo-type enzyme that specifically cleaves the non-reducing terminal glycosidic bond of chitooligosaccharides. Catalyzes the hydrolysis of GlcN-GlcNAc to glucosamine (GlcN) and N-acetylglucosamine (GlcNAc). Involved in chitin degradation. Can also hydrolyze chitosan and chitooligosaccharides of various chain lengths. The polypeptide is Exo-beta-D-glucosaminidase (Pyrococcus horikoshii (strain ATCC 700860 / DSM 12428 / JCM 9974 / NBRC 100139 / OT-3)).